The chain runs to 573 residues: SHC-transforming protein 2 (573 aa).

The PID domain occupies 125–307 (LGPGVSYIVR…TGLEESAWGD (183 aa)). In terms of domain architecture, SH2 spans 478–569 (WYHGRMSRRA…ESELHLRGVV (92 aa)).

As to quaternary structure, interacts with the Trk receptors in a phosphotyrosine-dependent manner and MEGF12. Once activated, binds to GRB2. Post-translationally, phosphorylated on tyrosine by the Trk receptors.

In terms of biological role, signaling adapter that couples activated growth factor receptors to signaling pathway in neurons. Involved in the signal transduction pathways of neurotrophin-activated Trk receptors in cortical neurons. In Rattus norvegicus (Rat), this protein is SHC-transforming protein 2 (Shc2).